A 358-amino-acid chain; its full sequence is Chorismate synthase (358 aa).

Residue R47 participates in NADP(+) binding. Residues 124-126 (RSS), 240-241 (NA), G284, 299-303 (KPVAT), and R325 contribute to the FMN site.

This sequence belongs to the chorismate synthase family. As to quaternary structure, homotetramer. FMNH2 serves as cofactor.

It catalyses the reaction 5-O-(1-carboxyvinyl)-3-phosphoshikimate = chorismate + phosphate. Its pathway is metabolic intermediate biosynthesis; chorismate biosynthesis; chorismate from D-erythrose 4-phosphate and phosphoenolpyruvate: step 7/7. In terms of biological role, catalyzes the anti-1,4-elimination of the C-3 phosphate and the C-6 proR hydrogen from 5-enolpyruvylshikimate-3-phosphate (EPSP) to yield chorismate, which is the branch point compound that serves as the starting substrate for the three terminal pathways of aromatic amino acid biosynthesis. This reaction introduces a second double bond into the aromatic ring system. This is Chorismate synthase from Phocaeicola vulgatus (strain ATCC 8482 / DSM 1447 / JCM 5826 / CCUG 4940 / NBRC 14291 / NCTC 11154) (Bacteroides vulgatus).